Here is a 1876-residue protein sequence, read N- to C-terminus: MNTDQQPYQGQTDYTQGPGNGQSQEQDYDQYGQPLYPSQADGYYDPNVAAGTEADMYGQQPPNESYDQDYTNGEYYGQPPNMAAQDGENFSDFSSYGPPGTPGYDSYGGQYTASQMSYGEPNSSGTSTPIYGNYDPNAIAMALPNEPYPAWTADSQSPVSIEQIEDIFIDLTNRLGFQRDSMRNMFDHFMVLLDSRSSRMSPDQALLSLHADYIGGDTANYKKWYFAAQLDMDDEIGFRNMSLGKLSRKARKAKKKNKKAMEEANPEDTEETLNKIEGDNSLEAADFRWKAKMNQLSPLERVRHIALYLLCWGEANQVRFTAECLCFIYKCALDYLDSPLCQQRQEPMPEGDFLNRVITPIYHFIRNQVYEIVDGRFVKRERDHNKIVGYDDLNQLFWYPEGIAKIVLEDGTKLIELPLEERYLRLGDVVWDDVFFKTYKETRTWLHLVTNFNRIWVMHISIFWMYFAYNSPTFYTHNYQQLVDNQPLAAYKWASCALGGTVASLIQIVATLCEWSFVPRKWAGAQHLSRRFWFLCIIFGINLGPIIFVFAYDKDTVYSTAAHVVAAVMFFVAVATIIFFSIMPLGGLFTSYMKKSTRRYVASQTFTAAFAPLHGLDRWMSYLVWVTVFAAKYSESYYFLVLSLRDPIRILSTTAMRCTGEYWWGAVLCKVQPKIVLGLVIATDFILFFLDTYLWYIIVNTIFSVGKSFYLGISILTPWRNIFTRLPKRIYSKILATTDMEIKYKPKVLISQVWNAIIISMYREHLLAIDHVQKLLYHQVPSEIEGKRTLRAPTFFVSQDDNNFETEFFPRDSEAERRISFFAQSLSTPIPEPLPVDNMPTFTVLTPHYAERILLSLREIIREDDQFSRVTLLEYLKQLHPVEWECFVKDTKILAEETAAYEGNENEAEKEDALKSQIDDLPFYCIGFKSAAPEYTLRTRIWASLRSQTLYRTISGFMNYSRAIKLLYRVENPEIVQMFGGNAEGLERELEKMARRKFKFLVSMQRLAKFKPHELENAEFLLRAYPDLQIAYLDEEPPLTEGEEPRIYSALIDGHCEILDNGRRRPKFRVQLSGNPILGDGKSDNQNHALIFYRGEYIQLIDANQDNYLEECLKIRSVLAEFEELNVEQVNPYAPGLRYEEQTTNHPVAIVGAREYIFSENSGVLGDVAAGKEQTFGTLFARTLSQIGGKLHYGHPDFINATFMTTRGGVSKAQKGLHLNEDIYAGMNAMLRGGRIKHCEYYQCGKGRDLGFGTILNFTTKIGAGMGEQMLSREYYYLGTQLPVDRFLTFYYAHPGFHLNNLFIQLSLQMFMLTLVNLSSLAHESIMCIYDRNKPKTDVLVPIGCYNFQPAVDWVRRYTLSIFIVFWIAFVPIVVQELIERGLWKATQRFFCHLLSLSPMFEVFAGQIYSSALLSDLAIGGARYISTGRGFATSRIPFSILYSRFAGSAIYMGARSMLMLLFGTVAHWQAPLLWFWASLSSLIFAPFVFNPHQFAWEDFFLDYRDYIRWLSRGNNQYHRNSWIGYVRMSRARITGFKRKLVGDESEKAAGDASRAHRTNLIMAEIIPCAIYAAGCFIAFTFINAQTGVKTTDDDRVNSVLRIIICTLAPIAVNLGVLFFCMGMSCCSGPLFGMCCKKTGSVMAGIAHGVAVIVHIAFFIVMWVLESFNFVRMLIGVVTCIQCQRLIFHCMTALMLTREFKNDHANTAFWTGKWYGKGMGYMAWTQPSRELTAKVIELSEFAADFVLGHVILICQLPLIIIPKIDKFHSIMLFWLKPSRQIRPPIYSLKQTRLRKRMVKKYCSLYFLVLAIFAGCIIGPAVASAKIHKHIGDSLDGVVHNLFQPINTTNNDTGSQMSTYQSHYYTHTPSLKTWSTIK.

2 stretches are compositionally biased toward polar residues: residues 1–25 and 60–71; these read MNTDQQPYQGQTDYTQGPGNGQSQE and QPPNESYDQDYT. The segment at 1–108 is disordered; that stretch reads MNTDQQPYQG…PGTPGYDSYG (108 aa). Residues 1-454 lie on the Cytoplasmic side of the membrane; the sequence is MNTDQQPYQG…WLHLVTNFNR (454 aa). Lysine 259 participates in a covalent cross-link: Glycyl lysine isopeptide (Lys-Gly) (interchain with G-Cter in ubiquitin). 2 positions are modified to phosphothreonine: threonine 269 and threonine 272. Residues lysine 275 and lysine 386 each participate in a glycyl lysine isopeptide (Lys-Gly) (interchain with G-Cter in ubiquitin) cross-link. The chain crosses the membrane as a helical span at residues 455–475; sequence IWVMHISIFWMYFAYNSPTFY. Residues 476 to 492 lie on the Extracellular side of the membrane; that stretch reads THNYQQLVDNQPLAAYK. A helical membrane pass occupies residues 493–513; the sequence is WASCALGGTVASLIQIVATLC. Residues 514 to 531 are Cytoplasmic-facing; the sequence is EWSFVPRKWAGAQHLSRR. A helical membrane pass occupies residues 532 to 552; that stretch reads FWFLCIIFGINLGPIIFVFAY. At 553–563 the chain is on the extracellular side; it reads DKDTVYSTAAH. A helical membrane pass occupies residues 564 to 584; it reads VVAAVMFFVAVATIIFFSIMP. The Cytoplasmic portion of the chain corresponds to 585–621; that stretch reads LGGLFTSYMKKSTRRYVASQTFTAAFAPLHGLDRWMS. The chain crosses the membrane as a helical span at residues 622–642; sequence YLVWVTVFAAKYSESYYFLVL. The Extracellular portion of the chain corresponds to 643-678; that stretch reads SLRDPIRILSTTAMRCTGEYWWGAVLCKVQPKIVLG. A helical transmembrane segment spans residues 679-699; the sequence is LVIATDFILFFLDTYLWYIIV. Over 700–1358 the chain is Cytoplasmic; that stretch reads NTIFSVGKSF…QPAVDWVRRY (659 aa). Glycyl lysine isopeptide (Lys-Gly) (interchain with G-Cter in ubiquitin) cross-links involve residues lysine 910 and lysine 915. A helical membrane pass occupies residues 1359 to 1379; the sequence is TLSIFIVFWIAFVPIVVQELI. Topologically, residues 1380-1444 are extracellular; that stretch reads ERGLWKATQR…RIPFSILYSR (65 aa). A helical membrane pass occupies residues 1445–1465; the sequence is FAGSAIYMGARSMLMLLFGTV. Residues 1466–1469 are Cytoplasmic-facing; that stretch reads AHWQ. The chain crosses the membrane as a helical span at residues 1470–1490; sequence APLLWFWASLSSLIFAPFVFN. Residues 1491–1560 lie on the Extracellular side of the membrane; sequence PHQFAWEDFF…DASRAHRTNL (70 aa). Glycyl lysine isopeptide (Lys-Gly) (interchain with G-Cter in ubiquitin) cross-links involve residues lysine 1539 and lysine 1547. Residues 1561–1581 traverse the membrane as a helical segment; that stretch reads IMAEIIPCAIYAAGCFIAFTF. Topologically, residues 1582–1601 are cytoplasmic; the sequence is INAQTGVKTTDDDRVNSVLR. Residues 1602–1622 form a helical membrane-spanning segment; it reads IIICTLAPIAVNLGVLFFCMG. The Extracellular portion of the chain corresponds to 1623-1643; it reads MSCCSGPLFGMCCKKTGSVMA. A helical transmembrane segment spans residues 1644–1664; sequence GIAHGVAVIVHIAFFIVMWVL. Topologically, residues 1665-1672 are cytoplasmic; sequence ESFNFVRM. A helical transmembrane segment spans residues 1673–1695; it reads LIGVVTCIQCQRLIFHCMTALML. At 1696–1802 the chain is on the extracellular side; sequence TREFKNDHAN…RKRMVKKYCS (107 aa). Residues 1803 to 1823 traverse the membrane as a helical segment; it reads LYFLVLAIFAGCIIGPAVASA. At 1824-1876 the chain is on the cytoplasmic side; it reads KIHKHIGDSLDGVVHNLFQPINTTNNDTGSQMSTYQSHYYTHTPSLKTWSTIK.

The protein belongs to the glycosyltransferase 48 family. As to quaternary structure, component of the 1,3-beta-glucan synthase (GS) complex, composed of two alternate catalytic subunits FKS1 or GSC2, and a regulatory subunit RHO1. Interacts with RHO1, which is a GTP-binding protein.

Its subcellular location is the mitochondrion. It is found in the cell membrane. The catalysed reaction is [(1-&gt;3)-beta-D-glucosyl](n) + UDP-alpha-D-glucose = [(1-&gt;3)-beta-D-glucosyl](n+1) + UDP + H(+). Functionally, alternate catalytic subunit of the 1,3-beta-glucan synthase (GS) complex. Synthesizes 1,3-beta-glucan, a major structural component of the yeast cell wall. Involved in cell wall synthesis, maintenance and remodeling. The chain is 1,3-beta-glucan synthase component FKS1 (FKS1) from Saccharomyces cerevisiae (strain ATCC 204508 / S288c) (Baker's yeast).